Consider the following 542-residue polypeptide: Chaperonin GroEL (542 aa).

ATP contacts are provided by residues 29-32, 86-90, Gly-413, and Asp-492; these read TLGP and DGTTT.

Belongs to the chaperonin (HSP60) family. Forms a cylinder of 14 subunits composed of two heptameric rings stacked back-to-back. Interacts with the co-chaperonin GroES.

It is found in the cytoplasm. It carries out the reaction ATP + H2O + a folded polypeptide = ADP + phosphate + an unfolded polypeptide.. Its function is as follows. Together with its co-chaperonin GroES, plays an essential role in assisting protein folding. The GroEL-GroES system forms a nano-cage that allows encapsulation of the non-native substrate proteins and provides a physical environment optimized to promote and accelerate protein folding. The protein is Chaperonin GroEL of Nocardia asteroides.